Consider the following 190-residue polypeptide: Large ribosomal subunit protein bL17 (190 aa).

The disordered stretch occupies residues 128 to 190; that stretch reads KKTAGRKAAQ…VEENNEQNKA (63 aa). Over residues 143–154 the composition is skewed to low complexity; that stretch reads ALAPAEETPAPT. Residues 179 to 190 are compositionally biased toward acidic residues; the sequence is LAVEENNEQNKA.

The protein belongs to the bacterial ribosomal protein bL17 family. In terms of assembly, part of the 50S ribosomal subunit. Contacts protein L32.

The sequence is that of Large ribosomal subunit protein bL17 from Salinispora tropica (strain ATCC BAA-916 / DSM 44818 / JCM 13857 / NBRC 105044 / CNB-440).